A 484-amino-acid chain; its full sequence is Probable peptide/nitrate transporter At3g43790 (484 aa).

12 consecutive transmembrane segments (helical) span residues 39-59 (FIWLVSLCTALPISSLFPYIY), 76-96 (FYAGFVGSSFMIGRALTSIFW), 107-127 (PIILIGTFSVIIFNTLFGLST), 129-149 (FWLAISVRFLLGCFNCLLGVI), 168-188 (VVSTSRGIGLILGPAIGGYLA), 210-230 (FLPSLVISVYATAVLIACWWL), 278-298 (MAIIIVYCVFSLQEIAYNEIF), 318-338 (VGEVLAISGLGLLVFQLLVYP), 355-375 (VLLIPLLSCYPYIALLSGVTL), 381-401 (CASIIKNALSISLVTGLFIML), 416-436 (ISMTAMSVFKSFGPAGGGVLF), and 460-480 (VFLVLNLVQLVGLILTFIPYI).

It belongs to the major facilitator superfamily.

It localises to the membrane. This chain is Probable peptide/nitrate transporter At3g43790 (ZIFL2), found in Arabidopsis thaliana (Mouse-ear cress).